The following is a 167-amino-acid chain: UPF0179 protein Pisl_0688 (167 aa).

It belongs to the UPF0179 family.

The protein is UPF0179 protein Pisl_0688 of Pyrobaculum islandicum (strain DSM 4184 / JCM 9189 / GEO3).